The chain runs to 706 residues: Choline transporter-like protein 2 (706 aa).

Over 1-33 (MGKEQQLYYGKHGTPQKYDPAFRGPIYNRGCTD) the chain is Cytoplasmic. Threonine 14 carries the post-translational modification Phosphothreonine. Residues 34–54 (IICCVFLFLAIVGYVAVGIIA) form a helical membrane-spanning segment. The Extracellular portion of the chain corresponds to 55-232 (WTHGDPRKVI…RIFEDYTVSW (178 aa)). Asparagine 187 and asparagine 200 each carry an N-linked (GlcNAc...) asparagine glycan. The chain crosses the membrane as a helical span at residues 233–253 (YWIIIGLIIAMVLSLLFIILL). Residues 254–256 (RFL) are Cytoplasmic-facing. A helical transmembrane segment spans residues 257-277 (AGIMVWVMIVMVILVLGYGIL). Topologically, residues 278–315 (HCYMEYARLRGEAGSDVSLVDLGFQTDFRVYLHLRQTW) are extracellular. The chain crosses the membrane as a helical span at residues 316 to 336 (VAFMIILSIVEVIIILLLIFL). At 337 to 364 (RKRILIAIALIKEASRAVGYVMCSLLYP) the chain is on the cytoplasmic side. The helical transmembrane segment at 365-385 (LVTFFLLCLCIAYWASTAIFL) threads the bilayer. The Extracellular portion of the chain corresponds to 386-457 (STSNEAVYKI…FNVFMFFWLA (72 aa)). 2 N-linked (GlcNAc...) asparagine glycosylation sites follow: asparagine 397 and asparagine 417. Residues 458–480 (NFVLALGQVTLAGAFASYYWAMN) form a helical membrane-spanning segment. Residues 481-504 (KPDDLPAFPLFSAFGRALRYHTGS) lie on the Cytoplasmic side of the membrane. A helical membrane pass occupies residues 505-525 (LAFGSLLLAIVQVIRVILEYL). Over 526–563 (DQRLKAAENKFAKFLMSCLKCCFWCLEKFIKFLNRNAY) the chain is Extracellular. Residues 564–584 (IMIAIYGTNFCTSARNAFFLL) traverse the membrane as a helical segment. Topologically, residues 585–599 (MRNIIRVAVLDKVTD) are cytoplasmic. A helical membrane pass occupies residues 600-620 (FLFLLGKLLIVGSVGILAFFF). The Extracellular segment spans residues 621 to 638 (FTHRIRIVQDTAPSLNYY). Residues 639 to 659 (WVPVVTVVIGSYLIAHGFFSV) traverse the membrane as a helical segment. Residues 660–706 (YGMCVDTLFLCFLEDLERNDGTPERPYFMSLTLKKILNKTNKRQAEA) are Cytoplasmic-facing.

Belongs to the CTL (choline transporter-like) family. In terms of assembly, interacts with COCH. Post-translationally, N-glycosylated.

The protein localises to the cell membrane. Its subcellular location is the mitochondrion outer membrane. The enzyme catalyses choline(out) + n H(+)(in) = choline(in) + n H(+)(out). It carries out the reaction ethanolamine(out) + n H(+)(in) = ethanolamine(in) + n H(+)(out). Choline/H+ antiporter, mainly in mitochodria. Also acts as a low-affinity ethanolamine/H+ antiporter, regulating the supply of extracellular ethanolamine (Etn) for the CDP-Etn pathway, redistribute intracellular Etn and balance the CDP-Cho and CDP-Etn arms of the Kennedy pathway. In Bos taurus (Bovine), this protein is Choline transporter-like protein 2 (SLC44A2).